The following is a 536-amino-acid chain: CTP synthase (536 aa).

The interval 1-267 (MSKFVFVTGG…CKETLKYLEL (267 aa)) is amidoligase domain. Ser-13 contributes to the CTP binding site. UTP is bound at residue Ser-13. ATP-binding positions include 14–19 (SIGKGI) and Asp-71. Mg(2+) is bound by residues Asp-71 and Glu-141. CTP-binding positions include 148–150 (DIE), 188–193 (KTKPTQ), and Lys-224. UTP-binding positions include 188–193 (KTKPTQ) and Lys-224. The Glutamine amidotransferase type-1 domain maps to 292–534 (KVALVGKYIE…IKSSQENLTQ (243 aa)). Gly-354 contacts L-glutamine. Cys-381 serves as the catalytic Nucleophile; for glutamine hydrolysis. Residues 382–385 (LGMQ), Glu-405, and Arg-462 each bind L-glutamine. Residues His-507 and Glu-509 contribute to the active site.

Belongs to the CTP synthase family. In terms of assembly, homotetramer.

The catalysed reaction is UTP + L-glutamine + ATP + H2O = CTP + L-glutamate + ADP + phosphate + 2 H(+). It carries out the reaction L-glutamine + H2O = L-glutamate + NH4(+). The enzyme catalyses UTP + NH4(+) + ATP = CTP + ADP + phosphate + 2 H(+). It participates in pyrimidine metabolism; CTP biosynthesis via de novo pathway; CTP from UDP: step 2/2. With respect to regulation, allosterically activated by GTP, when glutamine is the substrate; GTP has no effect on the reaction when ammonia is the substrate. The allosteric effector GTP functions by stabilizing the protein conformation that binds the tetrahedral intermediate(s) formed during glutamine hydrolysis. Inhibited by the product CTP, via allosteric rather than competitive inhibition. In terms of biological role, catalyzes the ATP-dependent amination of UTP to CTP with either L-glutamine or ammonia as the source of nitrogen. Regulates intracellular CTP levels through interactions with the four ribonucleotide triphosphates. The polypeptide is CTP synthase (Prochlorococcus marinus (strain MIT 9312)).